We begin with the raw amino-acid sequence, 232 residues long: tRNA (guanine-N(1)-)-methyltransferase (232 aa).

Position 116 (G116) interacts with S-adenosyl-L-methionine.

This sequence belongs to the RNA methyltransferase TrmD family. As to quaternary structure, homodimer.

The protein resides in the cytoplasm. It carries out the reaction guanosine(37) in tRNA + S-adenosyl-L-methionine = N(1)-methylguanosine(37) in tRNA + S-adenosyl-L-homocysteine + H(+). Specifically methylates guanosine-37 in various tRNAs. The sequence is that of tRNA (guanine-N(1)-)-methyltransferase from Chlorobium luteolum (strain DSM 273 / BCRC 81028 / 2530) (Pelodictyon luteolum).